A 312-amino-acid polypeptide reads, in one-letter code: Dihydroorotate dehydrogenase B (NAD(+)), catalytic subunit (312 aa).

FMN is bound by residues S23 and 47–48; that span reads KA. Residues K47 and 71 to 75 contribute to the substrate site; that span reads NAIGL. FMN-binding residues include N103 and N131. N131 contributes to the substrate binding site. Catalysis depends on C134, which acts as the Nucleophile. FMN contacts are provided by K171 and I197. A substrate-binding site is contributed by 198–199; the sequence is NT. Residues G223, 249-250, and 271-272 each bind FMN; these read GG and GT.

This sequence belongs to the dihydroorotate dehydrogenase family. Type 1 subfamily. In terms of assembly, heterotetramer of 2 PyrK and 2 PyrD type B subunits. FMN is required as a cofactor.

The protein localises to the cytoplasm. It catalyses the reaction (S)-dihydroorotate + NAD(+) = orotate + NADH + H(+). Its pathway is pyrimidine metabolism; UMP biosynthesis via de novo pathway; orotate from (S)-dihydroorotate (NAD(+) route): step 1/1. Functionally, catalyzes the conversion of dihydroorotate to orotate with NAD(+) as electron acceptor. The protein is Dihydroorotate dehydrogenase B (NAD(+)), catalytic subunit (pyrDB) of Streptococcus pneumoniae (strain ATCC BAA-255 / R6).